We begin with the raw amino-acid sequence, 313 residues long: tRNA dimethylallyltransferase (313 aa).

Residue 11–18 (GPTASGKT) coordinates ATP. A substrate-binding site is contributed by 13-18 (TASGKT). Interaction with substrate tRNA regions lie at residues 36–39 (DSRQ) and 160–164 (QRLIR).

The protein belongs to the IPP transferase family. In terms of assembly, monomer. Mg(2+) serves as cofactor.

It carries out the reaction adenosine(37) in tRNA + dimethylallyl diphosphate = N(6)-dimethylallyladenosine(37) in tRNA + diphosphate. In terms of biological role, catalyzes the transfer of a dimethylallyl group onto the adenine at position 37 in tRNAs that read codons beginning with uridine, leading to the formation of N6-(dimethylallyl)adenosine (i(6)A). In Chlorobaculum parvum (strain DSM 263 / NCIMB 8327) (Chlorobium vibrioforme subsp. thiosulfatophilum), this protein is tRNA dimethylallyltransferase.